A 791-amino-acid chain; its full sequence is Nuclear cap-binding protein subunit 1 (791 aa).

Positions 1 to 14 are enriched in basic and acidic residues; the sequence is MSRRRHSDENDGGP. Positions 1-24 are disordered; sequence MSRRRHSDENDGGPHHKRRKTSEP. Residues 28-240 form the MIF4G domain; that stretch reads EDRLESLICR…CLWAQIQKLK (213 aa). The stretch at 641–714 forms a coiled coil; that stretch reads LHSTIRKMNK…SEQKNLFLVI (74 aa). A disordered region spans residues 668-687; sequence KQHKHRDSDDNDEDSGRKDG.

Belongs to the NCBP1 family. Component of the nuclear cap-binding complex (CBC), a heterodimer composed of ncbp1/cbp80 and ncbp2/cbp20 that interacts with m7GpppG-capped RNA. Component of an alternative nuclear cap-binding complex (CBC) composed of ncbp1/cbp80 and ncbp3.

The protein localises to the nucleus. It localises to the cytoplasm. In terms of biological role, component of the cap-binding complex (CBC), which binds cotranscriptionally to the 5'-cap of pre-mRNAs and is involved in various processes such as pre-mRNA splicing, translation regulation, nonsense-mediated mRNA decay, RNA-mediated gene silencing (RNAi) by microRNAs (miRNAs) and mRNA export. The CBC complex is involved in mRNA export from the nucleus, leading to the recruitment of the mRNA export machinery to the 5'-end of mRNA and to mRNA export in a 5' to 3' direction through the nuclear pore. The CBC complex is also involved in mediating U snRNA and intronless mRNAs export from the nucleus. The CBC complex is essential for a pioneer round of mRNA translation, before steady state translation when the CBC complex is replaced by cytoplasmic cap-binding protein eIF4E. The pioneer round of mRNA translation mediated by the CBC complex plays a central role in nonsense-mediated mRNA decay (NMD), NMD only taking place in mRNAs bound to the CBC complex, but not on eIF4E-bound mRNAs. The CBC complex enhances NMD in mRNAs containing at least one exon-junction complex (EJC), promoting the interaction between UPF1 and UPF2. The CBC complex is also involved in 'failsafe' NMD, which is independent of the EJC complex, while it does not participate in Staufen-mediated mRNA decay (SMD). During cell proliferation, the CBC complex is also involved in microRNAs (miRNAs) biogenesis via its interaction with SRRT/ARS2 and is required for miRNA-mediated RNA interference. The CBC complex also acts as a negative regulator of parn, thereby acting as an inhibitor of mRNA deadenylation. In the CBC complex, ncbp1/cbp80 does not bind directly capped RNAs (m7GpppG-capped RNA) but is required to stabilize the movement of the N-terminal loop of ncbp2/cbp20 and lock the CBC into a high affinity cap-binding state with the cap structure. Associates with NCBP3 to form an alternative cap-binding complex (CBC) which plays a key role in mRNA export. The conventional CBC with NCBP2 binds both small nuclear RNA (snRNA) and messenger (mRNA) and is involved in their export from the nucleus whereas the alternative CBC with NCBP3 does not bind snRNA and associates only with mRNA thereby playing a role only in mRNA export. The chain is Nuclear cap-binding protein subunit 1 (ncbp1) from Xenopus tropicalis (Western clawed frog).